The following is a 1383-amino-acid chain: Palladin (1383 aa).

3 disordered regions span residues 1–22 (MSGTSSHESFYDSLSDMQEESK), 52–169 (DSET…SQLC), and 183–238 (FKAA…KSPG). Positions 78–96 (HPSHKETKLGEHASRRPQD) are enriched in basic and acidic residues. A compositionally biased stretch (polar residues) spans 191–201 (RSPNGESSSPD). A Phosphoserine modification is found at Ser-192. Residues 210 to 223 (QPSALLSASASQSP) show a composition bias toward low complexity. One can recognise an Ig-like C2-type 1 domain in the interval 271–360 (PRFIQKLRSQ…GSDTTSAEVF (90 aa)). Cys-292 and Cys-344 are disulfide-bonded. A Phosphoserine modification is found at Ser-401. Residues 440–539 (PPVFTKELQN…ATSTAQLVVT (100 aa)) enclose the Ig-like C2-type 2 domain. An intrachain disulfide couples Cys-462 to Cys-521. The interaction with VASP stretch occupies residues 562-566 (FPPPP). Disordered stretches follow at residues 609–653 (ETNG…LAKP), 673–728 (AGAR…SSGS), and 740–846 (AQNL…RFGH). Ser-632 is modified (phosphoserine). Thr-635 carries the post-translational modification Phosphothreonine. Position 641 is a phosphoserine (Ser-641). The interval 646-676 (PPPLLAKPKLDPLKLQQLQNQIRLEQEAGAR) is interaction with LASP1. The interval 676–696 (RQPPPAPRSAPPSPPFPPPPA) is interaction with SORBS2, SPIN90 and SRC. Residues 677-697 (QPPPAPRSAPPSPPFPPPPAF) are compositionally biased toward pro residues. Phosphoserine is present on residues Ser-684, Ser-688, and Ser-728. Residues 745 to 763 (PASGHGTPASSPSSSSLPS) show a composition bias toward low complexity. Residues 766-831 (SPTPRQFGRA…PPPPPPLPSP (66 aa)) are interaction with EPS8. Positions 796–831 (SPSPPPPPPPVFSPTAAFPVPDVFPLPPPPPPLPSP) are interaction with SORBS2, SPIN90, SRC and PFN1. 2 stretches are compositionally biased toward pro residues: residues 797–807 (PSPPPPPPPVF) and 817–830 (DVFPLPPPPPPLPS). Residues 819-823 (FPLPP) form an interaction with VASP region. Polar residues predominate over residues 832-846 (GQASHCSSPATRFGH). The interaction with ACTN stretch occupies residues 833-890 (QASHCSSPATRFGHSQTPAAFLSALLPSQPPPAAVNALGLPKGVTPAGFPKKASRTAR). Phosphoserine occurs at positions 893, 979, and 984. The Ig-like C2-type 3 domain occupies 1001-1085 (PFFEMKLKHY…MAANPQGRIS (85 aa)). Positions 1096-1125 (NQRGRSPRSPSGHPHVRRPRSRSRDSGDEN) are disordered. Over residues 1098-1108 (RGRSPRSPSGH) the composition is skewed to low complexity. A phosphoserine mark is found at Ser-1101, Ser-1104, Ser-1106, and Ser-1116. Ser-1118 carries the phosphoserine; by PKB/AKT1 modification. Ser-1121 is modified (phosphoserine). Ig-like C2-type domains lie at 1135–1226 (PHFL…LVVA) and 1233–1324 (PPVF…ARLD). Interaction with EZR regions lie at residues 1137–1226 (FLQA…LVVA) and 1236–1326 (FIEK…LDVY). An intrachain disulfide couples Cys-1156 to Cys-1208. Ser-1352 is modified (phosphoserine).

The protein belongs to the myotilin/palladin family. Interacts with EPS8. Interacts with LASP1. Interacts with VASP. Interacts with ACTN. Interacts with SORBS2. Interacts with PFN1. Interacts with LPP. Interacts with SPIN90. Interacts with SRC. Interacts with EZR. Interacts with RAI14. In terms of processing, phosphorylated predominantly on serines and, to a lesser extent, on tyrosines. Phosphorylation at Ser-1118 by PKB/AKT1 modulates cytoskeletal organization and cell motility. In terms of tissue distribution, detected in both muscle and non-muscle tissues. High expression in prostate, ovary, colon, and kidney. Not detected in spleen, skeletal muscle, lung and peripheral blood lymphocytes (at protein level). Protein is overexpressed in FA6, HPAF, IMIM-PC2, SUIT-2 and PancTu-II sporadic pancreatic cancer cell lines.

The protein localises to the cytoplasm. The protein resides in the cytoskeleton. It localises to the cell junction. It is found in the focal adhesion. Its subcellular location is the myofibril. The protein localises to the sarcomere. The protein resides in the z line. It localises to the cell projection. It is found in the ruffle. Its subcellular location is the podosome. The protein localises to the lamellipodium. The protein resides in the axon. It localises to the growth cone. Functionally, cytoskeletal protein required for organization of normal actin cytoskeleton. Roles in establishing cell morphology, motility, cell adhesion and cell-extracellular matrix interactions in a variety of cell types. May function as a scaffolding molecule with the potential to influence both actin polymerization and the assembly of existing actin filaments into higher-order arrays. Binds to proteins that bind to either monomeric or filamentous actin. Localizes at sites where active actin remodeling takes place, such as lamellipodia and membrane ruffles. Different isoforms may have functional differences. Involved in the control of morphological and cytoskeletal changes associated with dendritic cell maturation. Involved in targeting ACTN to specific subcellular foci. The polypeptide is Palladin (PALLD) (Homo sapiens (Human)).